The sequence spans 194 residues: Translationally-controlled tumor protein homolog 2 (194 aa).

In terms of domain architecture, TCTP spans 1–194 (MKLYKDLIGN…IKYGLLQVDV (194 aa)).

It belongs to the TCTP family.

Its subcellular location is the cytoplasm. Its function is as follows. Involved in calcium binding and microtubule stabilization. In Dictyostelium discoideum (Social amoeba), this protein is Translationally-controlled tumor protein homolog 2.